The following is a 334-amino-acid chain: Holliday junction branch migration complex subunit RuvB (334 aa).

Residues 1 to 181 form a large ATPase domain (RuvB-L) region; sequence MHDRLISGTE…FGIVQRLEFY (181 aa). ATP-binding positions include I20, R21, G62, K65, T66, T67, 128–130, R171, Y181, and R218; that span reads EDY. Position 66 (T66) interacts with Mg(2+). Residues 182 to 252 are small ATPAse domain (RuvB-S); the sequence is SVEDLTHIVT…MAQRALDMLN (71 aa). The segment at 255 to 334 is head domain (RuvB-H); that stretch reads KDGLDTLDRR…FGLTPPEPKN (80 aa). Residues R310 and R315 each contribute to the DNA site.

This sequence belongs to the RuvB family. Homohexamer. Forms an RuvA(8)-RuvB(12)-Holliday junction (HJ) complex. HJ DNA is sandwiched between 2 RuvA tetramers; dsDNA enters through RuvA and exits via RuvB. An RuvB hexamer assembles on each DNA strand where it exits the tetramer. Each RuvB hexamer is contacted by two RuvA subunits (via domain III) on 2 adjacent RuvB subunits; this complex drives branch migration. In the full resolvosome a probable DNA-RuvA(4)-RuvB(12)-RuvC(2) complex forms which resolves the HJ.

Its subcellular location is the cytoplasm. The enzyme catalyses ATP + H2O = ADP + phosphate + H(+). Its function is as follows. The RuvA-RuvB-RuvC complex processes Holliday junction (HJ) DNA during genetic recombination and DNA repair, while the RuvA-RuvB complex plays an important role in the rescue of blocked DNA replication forks via replication fork reversal (RFR). RuvA specifically binds to HJ cruciform DNA, conferring on it an open structure. The RuvB hexamer acts as an ATP-dependent pump, pulling dsDNA into and through the RuvAB complex. RuvB forms 2 homohexamers on either side of HJ DNA bound by 1 or 2 RuvA tetramers; 4 subunits per hexamer contact DNA at a time. Coordinated motions by a converter formed by DNA-disengaged RuvB subunits stimulates ATP hydrolysis and nucleotide exchange. Immobilization of the converter enables RuvB to convert the ATP-contained energy into a lever motion, pulling 2 nucleotides of DNA out of the RuvA tetramer per ATP hydrolyzed, thus driving DNA branch migration. The RuvB motors rotate together with the DNA substrate, which together with the progressing nucleotide cycle form the mechanistic basis for DNA recombination by continuous HJ branch migration. Branch migration allows RuvC to scan DNA until it finds its consensus sequence, where it cleaves and resolves cruciform DNA. In Acinetobacter baylyi (strain ATCC 33305 / BD413 / ADP1), this protein is Holliday junction branch migration complex subunit RuvB.